The primary structure comprises 607 residues: CRS2-associated factor 2, chloroplastic (607 aa).

Residues 1-75 are disordered; the sequence is MSPPPPQRPS…GNGGNPAFRA (75 aa). A chloroplast-targeting transit peptide spans 1-79; sequence MSPPPPQRPS…NPAFRAPHLR (79 aa). 2 consecutive CRM domains span residues 228–324 and 346–442; these read EPLT…TRPR and EGLT…YPKP. The segment at 482–505 is CRS2 binding; it reads KMFELWTNAIESSVALMLDDAEVD. The tract at residues 550–576 is disordered; it reads TEDEPETGTLEPQQHEFTESSDVAEDD.

In terms of assembly, interacts with CRS2 and RNA. Part of large ribonucleo-protein complexes that include group IIB introns, CRS2 and CAF2.

The protein localises to the plastid. It localises to the chloroplast stroma. In terms of biological role, required for the splicing of group IIB introns in chloroplasts. Forms splicing particles with CRS2. Interacts with RNA and confers intron specificity of the splicing particles. This is CRS2-associated factor 2, chloroplastic from Oryza sativa subsp. japonica (Rice).